The primary structure comprises 426 residues: L-cysteine:1D-myo-inositol 2-amino-2-deoxy-alpha-D-glucopyranoside ligase (426 aa).

Position 43 (Cys-43) interacts with Zn(2+). Residues 43–46, Ser-58, and 81–83 each bind L-cysteinyl-5'-AMP; these read CGIT and NVT. A 'HIGH' region motif is present at residues 45 to 55; it reads ITPYDATHMGH. The short motif at 200–205 is the 'ERGGDP' region element; the sequence is ERGGDP. Trp-241 lines the L-cysteinyl-5'-AMP pocket. Zn(2+) is bound at residue Cys-245. 263–265 serves as a coordination point for L-cysteinyl-5'-AMP; that stretch reads GSD. His-270 is a Zn(2+) binding site. Residue Val-296 coordinates L-cysteinyl-5'-AMP. A 'KMSKS' region motif is present at residues 302 to 306; it reads KMSKS.

The protein belongs to the class-I aminoacyl-tRNA synthetase family. MshC subfamily. In terms of assembly, monomer. Zn(2+) is required as a cofactor.

It carries out the reaction 1D-myo-inositol 2-amino-2-deoxy-alpha-D-glucopyranoside + L-cysteine + ATP = 1D-myo-inositol 2-(L-cysteinylamino)-2-deoxy-alpha-D-glucopyranoside + AMP + diphosphate + H(+). Catalyzes the ATP-dependent condensation of GlcN-Ins and L-cysteine to form L-Cys-GlcN-Ins. The sequence is that of L-cysteine:1D-myo-inositol 2-amino-2-deoxy-alpha-D-glucopyranoside ligase from Arthrobacter sp. (strain FB24).